The primary structure comprises 125 residues: Holo-[acyl-carrier-protein] synthase (125 aa).

2 residues coordinate Mg(2+): Asp-8 and Glu-55.

It belongs to the P-Pant transferase superfamily. AcpS family. Mg(2+) is required as a cofactor.

It localises to the cytoplasm. It carries out the reaction apo-[ACP] + CoA = holo-[ACP] + adenosine 3',5'-bisphosphate + H(+). Functionally, transfers the 4'-phosphopantetheine moiety from coenzyme A to a Ser of acyl-carrier-protein. This chain is Holo-[acyl-carrier-protein] synthase, found in Treponema pallidum (strain Nichols).